The sequence spans 55 residues: Large ribosomal subunit protein bL33 (55 aa).

It belongs to the bacterial ribosomal protein bL33 family.

This Aeromonas hydrophila subsp. hydrophila (strain ATCC 7966 / DSM 30187 / BCRC 13018 / CCUG 14551 / JCM 1027 / KCTC 2358 / NCIMB 9240 / NCTC 8049) protein is Large ribosomal subunit protein bL33.